We begin with the raw amino-acid sequence, 614 residues long: Phragmoplastin DRP1C (614 aa).

In terms of domain architecture, Dynamin-type G spans 32 to 301 (WEALPTVAVV…LETVIRQKIP (270 aa)). The tract at residues 42–49 (GGQSSGKS) is G1 motif. 45-50 (SSGKSS) is a binding site for GTP. The interval 68–70 (VTR) is G2 motif. Residues 143–146 (DLPG) are G3 motif. A G4 motif region spans residues 212 to 215 (TKLD). GTP-binding positions include 213 to 218 (KLDIMD) and 243 to 246 (NRSQ). The G5 motif stretch occupies residues 242–245 (VNRS). A disordered region spans residues 499–519 (EPEKEKPNPRNAPAPNADPYS). Positions 507 to 517 (PRNAPAPNADP) are enriched in low complexity. The GED domain occupies 523–614 (FRKIGSNVSA…RDDIDAVAWK (92 aa)).

The protein belongs to the TRAFAC class dynamin-like GTPase superfamily. Dynamin/Fzo/YdjA family. Forms homodimer and may homooligomerize and heterooligomerize to form the phragmoplastin complex. Binds to PHIP1. In terms of tissue distribution, ubiquitous.

The protein localises to the cytoplasm. It is found in the cytoskeleton. Its subcellular location is the cell cortex. The protein resides in the cytoplasmic vesicle. It localises to the clathrin-coated vesicle. The protein localises to the phragmoplast. The enzyme catalyses GTP + H2O = GDP + phosphate + H(+). Microtubule-associated force-producing protein that is targeted to the growing edges of the cell plate during cytokinesis. Also plays a major role in plasma membrane maintenance during pollen maturation. Has a GTPase activity. This Arabidopsis thaliana (Mouse-ear cress) protein is Phragmoplastin DRP1C.